The chain runs to 822 residues: MSDSTNLTIAEETLALLEWPRLCQHLSTFTQTPLGAIAARYLLPPSQWEESRELLAQTQAVESIENSPESNWHFKGIADITEPLARVERGGLVTGLELLAIAGTLAGVRRLRRVIEERDDLEILQTLVAEVRTLPELEQAIHHCLGEDGKVAERASPKLGEIRQKLKAVREQIQQKLQKIIQRQSNALQEAVITQRGDRFVLPIKAGYKEQMPGIVHDSSASGNTLYVEPQAIVELGNKLRQARRQEQTEEERILRQLSDQVLEVLLDLEHLLAIATRLDLATARVRYSFWLGAHPPQWLTPGDEKPITLRQLRHPLLHWQAEKEGGPAVVPITLTIDSQIRVIAITGPNTGGKTVTLKTLGLVALMAKVGLYIPAKETVEMPWFAQILADIGDEQSLQQNLSTFSGHICRIIRILQALPSGVQDVLDPEIDSPNHPIFPSLVLLDEVGAGTDPTEGSALAIALLRHLADQPCLTVATTHYGELKALKYQDARFENASVEFDDQSLSPTYRLLWGIPGRSNALAIAQRLGLPLAIVEQAKDKLGGFSEDINQVIAGLESQRREQEQKAANAQKLLQETEIFYQQVSQKAASLQARERELKSYQDQEVQQAIAAAKEEIAKVIRQLQRGKPSAQKAQQATEILGQIQAEQKAKVAPKPIGYQPTVGERIRIPSFGQTAEVTQVNATAQTVNVTLGLMKMTVPMADIESLNGKKVEPPPKSEPVPKKVKAEPPATEAKSPPVLVRTEKNTLDCRGDRLERAESRLEKALNQALDAGVLWIIHGKGTGKLRQGVQEYLSHHPLVKSYALAPQNDGGAGVTIAYLR.

Gly348–Thr355 is a binding site for ATP. The tract at residues Ser707 to Ser737 is disordered. Over residues Asn709 to Ala728 the composition is skewed to basic and acidic residues. The region spanning Leu749–Arg822 is the Smr domain.

Belongs to the DNA mismatch repair MutS family. MutS2 subfamily. As to quaternary structure, homodimer. Binds to stalled ribosomes, contacting rRNA.

Its function is as follows. Endonuclease that is involved in the suppression of homologous recombination and thus may have a key role in the control of bacterial genetic diversity. In terms of biological role, acts as a ribosome collision sensor, splitting the ribosome into its 2 subunits. Detects stalled/collided 70S ribosomes which it binds and splits by an ATP-hydrolysis driven conformational change. Acts upstream of the ribosome quality control system (RQC), a ribosome-associated complex that mediates the extraction of incompletely synthesized nascent chains from stalled ribosomes and their subsequent degradation. Probably generates substrates for RQC. This is Endonuclease MutS2 from Synechocystis sp. (strain ATCC 27184 / PCC 6803 / Kazusa).